Here is a 409-residue protein sequence, read N- to C-terminus: Transforming growth factor beta-3 proprotein (409 aa).

The N-terminal stretch at 1-21 (MHLQRALVVLALLNFATVSLS) is a signal peptide. Residues Asn72, Asn133, and Asn140 are each glycosylated (N-linked (GlcNAc...) asparagine). The Cell attachment site motif lies at 259-261 (RGD). Disulfide bonds link Cys304/Cys313, Cys312/Cys375, Cys341/Cys406, and Cys345/Cys408.

The protein belongs to the TGF-beta family. In terms of assembly, interacts with ASPN. Latency-associated peptide: Homodimer; disulfide-linked. Latency-associated peptide: Interacts with Transforming growth factor beta-3 (TGF-beta-3) chain; interaction is non-covalent and maintains (TGF-beta-3) in a latent state. Latency-associated peptide: Interacts with LRRC32/GARP; leading to regulate activation of TGF-beta-3 and promote epithelial fusion during palate development. Latency-associated peptide: Interacts (via cell attachment site) with integrins, leading to release of the active TGF-beta-3. Transforming growth factor beta-3: Homodimer; disulfide-linked. Transforming growth factor beta-3: Interacts with TGF-beta receptors (TGFBR1 and TGFBR2), leading to signal transduction. Post-translationally, transforming growth factor beta-3 proprotein: The precursor proprotein is cleaved in the Golgi apparatus to form Transforming growth factor beta-3 (TGF-beta-3) and Latency-associated peptide (LAP) chains, which remain non-covalently linked, rendering TGF-beta-3 inactive.

The protein resides in the secreted. The protein localises to the extracellular space. It is found in the extracellular matrix. In terms of biological role, transforming growth factor beta-3 proprotein: Precursor of the Latency-associated peptide (LAP) and Transforming growth factor beta-3 (TGF-beta-3) chains, which constitute the regulatory and active subunit of TGF-beta-3, respectively. Functionally, required to maintain the Transforming growth factor beta-3 (TGF-beta-3) chain in a latent state during storage in extracellular matrix. Associates non-covalently with TGF-beta-3 and regulates its activation via interaction with 'milieu molecules', such as LTBP1 and LRRC32/GARP, that control activation of TGF-beta-3. Interaction with integrins results in distortion of the Latency-associated peptide chain and subsequent release of the active TGF-beta-3. Its function is as follows. Transforming growth factor beta-3: Multifunctional protein that regulates embryogenesis and cell differentiation and is required in various processes such as secondary palate development. Activation into mature form follows different steps: following cleavage of the proprotein in the Golgi apparatus, Latency-associated peptide (LAP) and Transforming growth factor beta-3 (TGF-beta-3) chains remain non-covalently linked rendering TGF-beta-3 inactive during storage in extracellular matrix. At the same time, LAP chain interacts with 'milieu molecules', such as LTBP1 and LRRC32/GARP that control activation of TGF-beta-3 and maintain it in a latent state during storage in extracellular milieus. TGF-beta-3 is released from LAP by integrins: integrin-binding results in distortion of the LAP chain and subsequent release of the active TGF-beta-3. Once activated following release of LAP, TGF-beta-3 acts by binding to TGF-beta receptors (TGFBR1 and TGFBR2), which transduce signal. The sequence is that of Transforming growth factor beta-3 proprotein (TGFB3) from Sus scrofa (Pig).